A 618-amino-acid polypeptide reads, in one-letter code: MATLMNPVRDPNTLSNYNNWLCTHTTANFEIFFEEKKLVGNVVHKLRSITNAETDEIILDSHHVDIRNVQVAGLPVKAWELLPPLGPYGTALKIKLENPVGLNEIIDVDIAVQTTKECTALQWLTPAQTSNKKHPYMFSQCQAIHARSIFPCQDTPDVKCTFDFNITSPLPVIASGLPVRSTSTVPQSGVKTLHRFHQKVPIPSYLFALASGDIAEAAIGPRSVVATSPDKLEECKWELEADTERFIKTIEEIIYPYAWGEYNVLILPPSFPYGGMENPVFTFATPSIISKDRENVDVIAHELAHSWSGNLVTSASWEHFWLNEGWTVYLERRILASLHGEKYRHFSAIIGWKALRDSVEHYSHDHEFTKLVPNLKGEDPDDAFSTIPYEKGFNFLFHLENLVGKEKFDRFIPHYFTTFKGKSLDSYDFKATLLDFFKSDAEASRLLQELDWDSWFYKPGLPPKPEFDTSLADVVYELAGKWRSLPESPFQPQPSDIQGLTANQIVVFLEQILLFERPLTAELSKLMGEVYGLTGSENIEVANLYLQVGLKAADKSVIGPTTDLLGRIGRMKFVRPLYRALQKVDRQVAIDTFEKHKDFYHPICRGMVEKDLFGKKDA.

A peptide is bound by residues Q140–Q142 and P272–E277. Residue H301 participates in Zn(2+) binding. The active-site Proton acceptor is E302. 2 residues coordinate Zn(2+): H305 and E324. Y389 functions as the Proton donor in the catalytic mechanism.

This sequence belongs to the peptidase M1 family. Zn(2+) is required as a cofactor.

The protein localises to the cytoplasm. Its subcellular location is the nucleus. The enzyme catalyses an epoxide + H2O = an ethanediol. Its function is as follows. Aminopeptidase that preferentially cleaves di- and tripeptides. Also has low epoxide hydrolase activity (in vitro). Can hydrolyze the epoxide leukotriene LTA(4) but it forms preferentially 5,6-dihydroxy-7,9,11,14-eicosatetraenoic acid rather than the cytokine leukotriene B(4) as the product compared to the homologous mammalian enzyme (in vitro). The polypeptide is Leucine aminopeptidase 2 (Emericella nidulans (strain FGSC A4 / ATCC 38163 / CBS 112.46 / NRRL 194 / M139) (Aspergillus nidulans)).